The following is a 430-amino-acid chain: Vitamin B6 salvage pathway transcriptional repressor PtsJ (430 aa).

Residues 4 to 72 enclose the HTH gntR-type domain; the sequence is GKTANEIFDS…GRNGTVIKGS (69 aa). Positions 32 to 51 form a DNA-binding region, H-T-H motif; sequence VRELASELKVNRNTVAAAYK. Positions 70–95 are disordered; it reads KGSPSPVALEGGDPHTPLHDLSGGNP. Lys282 carries the N6-(pyridoxal phosphate)lysine modification.

This sequence in the C-terminal section; belongs to the class-I pyridoxal-phosphate-dependent aminotransferase family. In terms of assembly, homodimer in both apo- and holo-forms.

In terms of biological role, acts as a transcriptional repressor of the pdxK gene, encoding a pyridoxal kinase involved in the vitamin B6 salvage pathway. Also represses transcription of its own gene. Binds to the ptsJ-pdxK intergenic region, but does not bind pdxY and pdxH promoters. Among all six B6 vitamers, only pyridoxal 5'-phosphate (PLP) clearly binds to the protein and acts as an effector molecule for PtsJ, inducing a protein conformational change that increases affinity for DNA. Thus, PLP stabilizes protein-DNA interactions, reinforcing repression. This is Vitamin B6 salvage pathway transcriptional repressor PtsJ from Salmonella typhimurium (strain LT2 / SGSC1412 / ATCC 700720).